The chain runs to 265 residues: UPF0246 protein NT01EI_0662 (265 aa).

This sequence belongs to the UPF0246 family.

This chain is UPF0246 protein NT01EI_0662, found in Edwardsiella ictaluri (strain 93-146).